A 426-amino-acid polypeptide reads, in one-letter code: Glutamyl-tRNA reductase (426 aa).

Residues 52–55 (TCNR), Ser110, 115–117 (EYE), and Gln121 contribute to the substrate site. Cys53 functions as the Nucleophile in the catalytic mechanism. Position 190–195 (190–195 (GAGEMG)) interacts with NADP(+).

The protein belongs to the glutamyl-tRNA reductase family. As to quaternary structure, homodimer.

It catalyses the reaction (S)-4-amino-5-oxopentanoate + tRNA(Glu) + NADP(+) = L-glutamyl-tRNA(Glu) + NADPH + H(+). It functions in the pathway porphyrin-containing compound metabolism; protoporphyrin-IX biosynthesis; 5-aminolevulinate from L-glutamyl-tRNA(Glu): step 1/2. Functionally, catalyzes the NADPH-dependent reduction of glutamyl-tRNA(Glu) to glutamate 1-semialdehyde (GSA). The protein is Glutamyl-tRNA reductase of Saccharolobus islandicus (strain Y.N.15.51 / Yellowstone #2) (Sulfolobus islandicus).